The sequence spans 138 residues: Protein FAM136A (138 aa).

A2 carries the N-acetylalanine modification. A phosphothreonine mark is found at T124 and T126.

This sequence belongs to the FAM136 family.

This is Protein FAM136A (FAM136A) from Bos taurus (Bovine).